Here is a 152-residue protein sequence, read N- to C-terminus: Ribonuclease H (152 aa).

Residues 1 to 142 (MDSKVVIYTD…ADKLAVQGRE (142 aa)) enclose the RNase H type-1 domain. Residues Asp10, Glu48, Asp70, and Asp134 each coordinate Mg(2+).

Belongs to the RNase H family. As to quaternary structure, monomer. Mg(2+) is required as a cofactor.

It is found in the cytoplasm. The catalysed reaction is Endonucleolytic cleavage to 5'-phosphomonoester.. In terms of biological role, endonuclease that specifically degrades the RNA of RNA-DNA hybrids. This is Ribonuclease H from Rickettsia typhi (strain ATCC VR-144 / Wilmington).